Consider the following 406-residue polypeptide: MIQLSEDQIVKVTGDVSSPKGFQAKGVHCGLRYSKKDLGVIISETPAVSAAVYTQSHFQAAPIKVTQDSLKHGPTLKAVIVNSAIANACTGEQGLKDAYTMRESFASQLGIEPELVAVSSTGVIGEHLDMEKIHAGIELLKETPAGSGDFEEAILTTDTVIKQTCYELAIGGKTVTIGGAAKGSGMIHPNMATMLGFVTTDAAIEEKALQKALREITDVSFNQITVDGETSTNDMVLVMANGCAENECLTEDHPDWPVFKKALLLTCEDLAKEIARDGEGATKLIEAQVQGAKNNLDANVIAKKIVGSNLVKTAVYGTDANWGRIIGAIGHSAAQVTAEEVEVYLGGQCLFKNNEPQPFSESIAKEYLEGDEITIVIKMAEGDGNGRAWGCDLTYDYIKINASYRT.

6 residues coordinate substrate: Thr-156, Lys-182, Thr-193, Glu-279, Asn-401, and Thr-406. Thr-193 (nucleophile) is an active-site residue.

Belongs to the ArgJ family. Heterotetramer of two alpha and two beta chains.

The protein localises to the cytoplasm. It carries out the reaction N(2)-acetyl-L-ornithine + L-glutamate = N-acetyl-L-glutamate + L-ornithine. The enzyme catalyses L-glutamate + acetyl-CoA = N-acetyl-L-glutamate + CoA + H(+). The protein operates within amino-acid biosynthesis; L-arginine biosynthesis; L-ornithine and N-acetyl-L-glutamate from L-glutamate and N(2)-acetyl-L-ornithine (cyclic): step 1/1. Its pathway is amino-acid biosynthesis; L-arginine biosynthesis; N(2)-acetyl-L-ornithine from L-glutamate: step 1/4. Feedback inhibition by L-arginine. In terms of biological role, catalyzes two activities which are involved in the cyclic version of arginine biosynthesis: the synthesis of N-acetylglutamate from glutamate and acetyl-CoA as the acetyl donor, and of ornithine by transacetylation between N(2)-acetylornithine and glutamate. The protein is Arginine biosynthesis bifunctional protein ArgJ of Bacillus amyloliquefaciens (Bacillus velezensis).